Consider the following 130-residue polypeptide: Small ribosomal subunit protein uS9 (130 aa).

Belongs to the universal ribosomal protein uS9 family.

The polypeptide is Small ribosomal subunit protein uS9 (Streptococcus uberis (strain ATCC BAA-854 / 0140J)).